A 215-amino-acid polypeptide reads, in one-letter code: MEINTVLFDLDGTLINTNELIISSFLHTFETYYPGKYGRKDAIECIGPPLTDSFKRLDPERVEEMVATYRKHNHAHHDKLVEPYEGVYETVKTLHEQGFKLAIVTTKIRETAMKGLKLFGLDEFFDVIVALDDVENVKPNPEPLEKAMNALGAKKEETIMVGDNSHDILGGKNAGVKTAVVGYAIRGEDYVRQFDPDYVLRSMPDLLDIVGVKAR.

Catalysis depends on aspartate 9, which acts as the Nucleophile.

Belongs to the HAD-like hydrolase superfamily. PpaX family. Mg(2+) serves as cofactor.

The enzyme catalyses diphosphate + H2O = 2 phosphate + H(+). Hydrolyzes pyrophosphate formed during P-Ser-HPr dephosphorylation by HPrK/P. Might play a role in controlling the intracellular pyrophosphate pool. The sequence is that of Pyrophosphatase PpaX from Halalkalibacterium halodurans (strain ATCC BAA-125 / DSM 18197 / FERM 7344 / JCM 9153 / C-125) (Bacillus halodurans).